The sequence spans 64 residues: Large ribosomal subunit protein uL30 (64 aa).

The protein belongs to the universal ribosomal protein uL30 family. In terms of assembly, part of the 50S ribosomal subunit.

The protein is Large ribosomal subunit protein uL30 of Beijerinckia indica subsp. indica (strain ATCC 9039 / DSM 1715 / NCIMB 8712).